The chain runs to 126 residues: MLMHFIPRRSSKAVQFNWLEIGVWRGGVYVKKGIVNARTNNSNFYKMPVVFGIVKGMGALCVHAWGMGYGGIIDCSPVTEHGNISVLQLEYMPWICLSKIMSCSVASRHSNVWIMDETIAPLVGCL.

This is an uncharacterized protein from Saccharomyces cerevisiae (strain ATCC 204508 / S288c) (Baker's yeast).